The sequence spans 514 residues: 1-pyrroline-5-carboxylate dehydrogenase (514 aa).

Residues glutamate 286 and cysteine 320 contribute to the active site.

This sequence belongs to the aldehyde dehydrogenase family. RocA subfamily.

The enzyme catalyses L-glutamate 5-semialdehyde + NAD(+) + H2O = L-glutamate + NADH + 2 H(+). It functions in the pathway amino-acid degradation; L-proline degradation into L-glutamate; L-glutamate from L-proline: step 2/2. This chain is 1-pyrroline-5-carboxylate dehydrogenase, found in Staphylococcus aureus (strain MSSA476).